The following is a 163-amino-acid chain: 3-isopropylmalate dehydratase small subunit (163 aa).

It belongs to the LeuD family. LeuD type 2 subfamily. As to quaternary structure, heterodimer of LeuC and LeuD.

The enzyme catalyses (2R,3S)-3-isopropylmalate = (2S)-2-isopropylmalate. It participates in amino-acid biosynthesis; L-leucine biosynthesis; L-leucine from 3-methyl-2-oxobutanoate: step 2/4. Its function is as follows. Catalyzes the isomerization between 2-isopropylmalate and 3-isopropylmalate, via the formation of 2-isopropylmaleate. The protein is 3-isopropylmalate dehydratase small subunit of Clostridioides difficile (strain 630) (Peptoclostridium difficile).